A 318-amino-acid chain; its full sequence is Thymidylate synthase (318 aa).

Residues Arg25 and 180 to 181 (RR) each bind dUMP. Cys200 acts as the Nucleophile in catalysis. DUMP is bound by residues 220 to 223 (RSGD), Asn231, and 261 to 263 (HIY). (6R)-5,10-methylene-5,6,7,8-tetrahydrofolate is bound at residue Asp223. Ala317 serves as a coordination point for (6R)-5,10-methylene-5,6,7,8-tetrahydrofolate.

The protein belongs to the thymidylate synthase family. Bacterial-type ThyA subfamily. In terms of assembly, homodimer.

It localises to the cytoplasm. The enzyme catalyses dUMP + (6R)-5,10-methylene-5,6,7,8-tetrahydrofolate = 7,8-dihydrofolate + dTMP. The protein operates within pyrimidine metabolism; dTTP biosynthesis. In terms of biological role, catalyzes the reductive methylation of 2'-deoxyuridine-5'-monophosphate (dUMP) to 2'-deoxythymidine-5'-monophosphate (dTMP) while utilizing 5,10-methylenetetrahydrofolate (mTHF) as the methyl donor and reductant in the reaction, yielding dihydrofolate (DHF) as a by-product. This enzymatic reaction provides an intracellular de novo source of dTMP, an essential precursor for DNA biosynthesis. The chain is Thymidylate synthase from Lactobacillus acidophilus (strain ATCC 700396 / NCK56 / N2 / NCFM).